Reading from the N-terminus, the 132-residue chain is Small heat shock protein hspL (132 aa).

The 117-residue stretch at 15-131 (TFTNFVSAPV…VKMSNNNKVE (117 aa)) folds into the sHSP domain.

The protein belongs to the small heat shock protein (HSP20) family.

The sequence is that of Small heat shock protein hspL (hspL) from Dictyostelium discoideum (Social amoeba).